The sequence spans 221 residues: Ras-related protein Rab-28 (221 aa).

Serine 2 bears the N-acetylserine mark. The residue at position 8 (serine 8) is a Phosphoserine. Residues glycine 21, glycine 24, lysine 25, threonine 26, serine 27, glycine 38, lysine 39, tyrosine 41, and threonine 44 each contribute to the GTP site. Residue threonine 26 participates in Mg(2+) binding. The tract at residues 35-49 is switch I; sequence ETFGKRYKQTIGLDF. Residues threonine 44 and aspartate 68 each contribute to the Mg(2+) site. Positions 68-85 are switch II; sequence DIGGQTIGGKMLDKYIYG. 6 residues coordinate GTP: glycine 71, asparagine 129, lysine 130, aspartate 132, alanine 160, and lysine 161. Cysteine methyl ester is present on cysteine 218. The S-farnesyl cysteine moiety is linked to residue cysteine 218. The propeptide at 219-221 is removed in mature form; it reads AVQ.

It belongs to the small GTPase superfamily. Rab family. In terms of assembly, interacts (prenylated form) with PDE6D; the interaction promotes RAB28 delivery to the photoreceptor outer segments. Interacts with KCNJ13; the interaction may facilitate cone outer segments phagocytosis. Also participates in nuclear factor kappa-B p65/RELA nuclear transport in endothelial cells. Mg(2+) serves as cofactor. Post-translationally, isoprenylated.

Its subcellular location is the cell membrane. It localises to the cytoplasm. It is found in the cytoskeleton. The protein resides in the cilium basal body. The protein localises to the nucleus. The catalysed reaction is GTP + H2O = GDP + phosphate + H(+). Regulated by guanine nucleotide exchange factors (GEFs) which promote the exchange of bound GDP for free GTP. Regulated by GTPase activating proteins (GAPs) which increase the GTP hydrolysis activity. Inhibited by GDP dissociation inhibitors (GDIs). Its function is as follows. The small GTPases Rab are key regulators of intracellular membrane trafficking, from the formation of transport vesicles to their fusion with membranes. Rabs cycle between an inactive GDP-bound form and an active GTP-bound form that is able to recruit to membranes different sets of downstream effectors directly responsible for vesicle formation, movement, tethering and fusion. RAB28 is required for shedding and phagocytosis of cone cell outer segments (OS) discs in the retina. Also participates in nuclear factor kappa-B p65/RELA nuclear transport in endothelial cells. The chain is Ras-related protein Rab-28 (RAB28) from Pongo abelii (Sumatran orangutan).